We begin with the raw amino-acid sequence, 95 residues long: Cerebratulus toxin A-III (95 aa).

Disulfide bonds link cysteine 17–cysteine 38, cysteine 23–cysteine 34, and cysteine 48–cysteine 61.

This sequence belongs to the worm cytolysin family.

It is found in the secreted. Its function is as follows. Permeabilizes a variety of cells. Forms large pores which allows the release of large proteins almost as rapidly as small organic molecules and inorganic ions. At sublytic concentrations, the toxin also inhibits protein kinase C and endogenous voltage-gated cation selective (sodium, calcium) channels occurring in the nervous and cardiovascular systems. This is Cerebratulus toxin A-III from Cerebratulus lacteus (Milky ribbon worm).